Reading from the N-terminus, the 457-residue chain is MIGSLTARIFAIFWLTLALVLMLVLMLPKLDSRQMTELLDSEQRQGLMIEQHVEAELANDPPNDLMWWRRLFRAIDKWAPPGQRLLLVTTEGRVIGAERSEMQIIRNFIGQADNADHPQKKKYGRVELVGPFSVRDGEDNYQLYLIRPASSSQSDFINLLFDRPLLLLIVTMLVSTPLLLWLAWSLAKPARKLKNAADEVAQGNLRQHPELEAGPQEFLAAGASFNQMVTALERMMTSQQRLLSDISHELRTPLTRLQLGTALLRRRSGESKELERIETEAQRLDSMINDLLVMSRNQQKNALVSETIKANQLWSEVLDNAAFEAEQMGKSLTVNFPPGPWPLYGNPNALESALENIVRNALRYSHTKIEVGFAVDKDGITITVDDDGPGVSPEDREQIFRPFYRTDEARDRESGGTGLGLAIVETAIQQHRGWVKAEDSPLGGLRLVIWLPLYKRS.

Residues 1–7 lie on the Cytoplasmic side of the membrane; it reads MIGSLTA. Residues 8 to 29 traverse the membrane as a helical segment; sequence RIFAIFWLTLALVLMLVLMLPK. Over 30–163 the chain is Periplasmic; it reads LDSRQMTELL…SDFINLLFDR (134 aa). The chain crosses the membrane as a helical span at residues 164–184; it reads PLLLLIVTMLVSTPLLLWLAW. An HAMP domain is found at 185-237; that stretch reads SLAKPARKLKNAADEVAQGNLRQHPELEAGPQEFLAAGASFNQMVTALERMMT. Residues 185–457 are Cytoplasmic-facing; sequence SLAKPARKLK…VIWLPLYKRS (273 aa). Residues 245–455 form the Histidine kinase domain; it reads DISHELRTPL…RLVIWLPLYK (211 aa). Phosphohistidine; by autocatalysis is present on His-248.

The protein resides in the cell inner membrane. It catalyses the reaction ATP + protein L-histidine = ADP + protein N-phospho-L-histidine.. Its function is as follows. This protein is involved in several diverse cellular processes, such as the functioning of acetohydroxyacid synthetase I, in the biosynthesis of isoleucine and valine, the TraJ protein activation activity for tra gene expression in F plasmid, and the synthesis, translocation, or stability of cell envelope proteins. Activates CpxR by phosphorylation. This is Sensor protein CpxA (cpxA) from Escherichia coli O157:H7.